The following is a 67-amino-acid chain: MEWIKCSERMPESGITVLGYCVCNSNFSGIYTMRKPVIEAKNSKQDTRLIKHERVTHWMPLPEPPSE.

This is an uncharacterized protein from Salmonella typhimurium (Bacteriophage P22).